We begin with the raw amino-acid sequence, 751 residues long: Palmitoyltransferase ZDHHC8B (751 aa).

Residues 1-13 lie on the Cytoplasmic side of the membrane; sequence MPNSVGKRFKPTK. A helical transmembrane segment spans residues 14 to 34; that stretch reads YIPVSTAATLLVGSTTLFFVF. Topologically, residues 35–41 are extracellular; sequence TCPWLTK. The helical transmembrane segment at 42-62 threads the bilayer; that stretch reads AVSPVVPLYNGIVFLFVLANF. Over 63 to 148 the chain is Cytoplasmic; it reads SMATFMDPGV…NCIGRRNYRY (86 aa). Positions 104-154 constitute a DHHC domain; sequence KWCATCHFYRPPRCSHCSVCDNCVEEFDHHCPWVNNCIGRRNYRYFFLFLL. The active-site S-palmitoyl cysteine intermediate is Cys134. The helical transmembrane segment at 149-169 threads the bilayer; that stretch reads FFLFLLSLSVHMVGVFSFGLL. Topologically, residues 170-185 are extracellular; that stretch reads FVLHHLETLSALHTTV. The chain crosses the membrane as a helical span at residues 186 to 206; sequence TLVVMCVTGLFFIPVMGLTGF. Residues 207–751 are Cytoplasmic-facing; that stretch reads HMVLVARGRT…VGGTTYEISV (545 aa). Disordered regions lie at residues 293-346, 437-461, 633-659, 666-685, and 703-736; these read RSKS…PSTP, CTPLGGTKHETITSTPHRGVFSPGT, RSSASSLVRAPRTSTTSLHTDGGGMNR, RSPVHQSHQSPTSVPRSPSY, and HLGTREDIGQGKVNGQLKGQYGTPSGTPSRHTSV. Residues 326 to 338 are compositionally biased toward low complexity; sequence SQLTSSEESSLSS. 3 stretches are compositionally biased toward polar residues: residues 633-651, 669-681, and 724-733; these read RSSASSLVRAPRTSTTSLH, VHQSHQSPTSVPR, and GTPSGTPSRH.

It belongs to the DHHC palmitoyltransferase family. ERF2/ZDHHC9 subfamily.

The protein resides in the golgi apparatus membrane. Its subcellular location is the mitochondrion membrane. The enzyme catalyses L-cysteinyl-[protein] + hexadecanoyl-CoA = S-hexadecanoyl-L-cysteinyl-[protein] + CoA. Functionally, palmitoyltransferase that catalyzes the addition of palmitate onto various protein substrates and therefore function in several unrelated biological processes. The chain is Palmitoyltransferase ZDHHC8B from Danio rerio (Zebrafish).